Reading from the N-terminus, the 513-residue chain is Activin receptor type-2A (513 aa).

An N-terminal signal peptide occupies residues 1–19 (MGAAAKLAFAVFLISCSSG). The Extracellular portion of the chain corresponds to 20-135 (AILGRSETQE…TSNPVTPKPP (116 aa)). 5 disulfide bridges follow: cysteine 30/cysteine 60, cysteine 50/cysteine 78, cysteine 85/cysteine 104, cysteine 91/cysteine 103, and cysteine 105/cysteine 110. Asparagine 43 and asparagine 66 each carry an N-linked (GlcNAc...) asparagine glycan. The chain crosses the membrane as a helical span at residues 136-161 (YYNILLYSLVPLMLIAGIVICAFWVY). Topologically, residues 162 to 513 (RHHKMAYPPV…VDFPPKESSL (352 aa)) are cytoplasmic. Residues 192–485 (LQLLEVKARG…GERITQMQRL (294 aa)) form the Protein kinase domain. Residues 198 to 206 (KARGRFGCV) and lysine 219 contribute to the ATP site. The active-site Proton acceptor is the aspartate 322.

The protein belongs to the protein kinase superfamily. TKL Ser/Thr protein kinase family. TGFB receptor subfamily. In terms of assembly, part of a complex consisting of MAGI2/ARIP1, ACVR2A, ACVR1B and SMAD3. Interacts with MAGI2/ARIP1. Interacts with type I receptor ACVR1. Interacts with BMP7. Interacts with TSC22D1/TSC-22. Interacts with activin A/INHBA. The cofactor is Mg(2+). Mn(2+) serves as cofactor.

Its subcellular location is the cell membrane. It catalyses the reaction L-threonyl-[receptor-protein] + ATP = O-phospho-L-threonyl-[receptor-protein] + ADP + H(+). It carries out the reaction L-seryl-[receptor-protein] + ATP = O-phospho-L-seryl-[receptor-protein] + ADP + H(+). In terms of biological role, on ligand binding, forms a receptor complex consisting of two type II and two type I transmembrane serine/threonine kinases. Type II receptors phosphorylate and activate type I receptors which autophosphorylate, then bind and activate SMAD transcriptional regulators. Receptor for activin A, activin B and inhibin A. Mediates induction of adipogenesis by GDF6. This Homo sapiens (Human) protein is Activin receptor type-2A.